Here is a 20-residue protein sequence, read N- to C-terminus: Dihydroorotase-like protein (20 aa).

Belongs to the metallo-dependent hydrolases superfamily. DHOase family. PyrC' subfamily. In terms of assembly, heterododecamer of 6 active PyrB subunits and 6 non-catalytic PyrC' subunits.

Non-functional DHOase. The chain is Dihydroorotase-like protein (pyrC') from Pseudomonas fluorescens biotype A.